A 548-amino-acid polypeptide reads, in one-letter code: Aspergilol synthase AuAP450 (548 aa).

The chain crosses the membrane as a helical span at residues 38–58 (PQLVITTLGALLLAAFYLLPS). Cys489 lines the heme pocket.

It belongs to the cytochrome P450 family. Heme is required as a cofactor.

Its subcellular location is the membrane. The protein operates within secondary metabolite biosynthesis; terpenoid biosynthesis. In terms of biological role, cytochrome P450 monooxygenase; part of the gene cluster that mediates the biosynthesis of aspergiltriene A, aspergildienes A-D and aspergilols A-D. The bifunctional terpene synthase AuAS converts DMAPP and IPP into sesterterpenes. The C-terminal prenyltransferase (PT) domain of AuAS catalyzes formation of GFPP, whereas the N-terminal terpene cyclase (TC) domain catalyzes the cyclization of GFPP into 5 distinct sesterterpenes: aspergiltriene A, aspergildiene A, aspergildiene B, aspergildiene C and aspergildiene D. The cytochrome P450 monooxygenase AP450 then hydroxylates the aspergildienes A, B, C and D to yield the corresponding sesterterpene alcohols, aspergilols A-D. In Aspergillus ustus, this protein is Aspergilol synthase AuAP450.